A 213-amino-acid chain; its full sequence is Glutathione S-transferase PARB (213 aa).

Residues 1–82 (MAIKVHGSPM…YIAHVYADNG (82 aa)) enclose the GST N-terminal domain. Glutathione-binding positions include Ser11, 12-13 (TA), 40-41 (HK), 53-54 (QV), and 66-67 (ES). The 125-residue stretch at 89 to 213 (DPKKMPSMSV…WVKGLEKLQK (125 aa)) folds into the GST C-terminal domain.

Belongs to the GST superfamily. Phi family.

It carries out the reaction RX + glutathione = an S-substituted glutathione + a halide anion + H(+). In terms of biological role, conjugation of reduced glutathione to a wide number of exogenous and endogenous hydrophobic electrophiles. The sequence is that of Glutathione S-transferase PARB from Nicotiana tabacum (Common tobacco).